The primary structure comprises 226 residues: Enolase-phosphatase E1 (226 aa).

It belongs to the HAD-like hydrolase superfamily. MasA/MtnC family. As to quaternary structure, monomer. Requires Mg(2+) as cofactor.

It carries out the reaction 5-methylsulfanyl-2,3-dioxopentyl phosphate + H2O = 1,2-dihydroxy-5-(methylsulfanyl)pent-1-en-3-one + phosphate. The protein operates within amino-acid biosynthesis; L-methionine biosynthesis via salvage pathway; L-methionine from S-methyl-5-thio-alpha-D-ribose 1-phosphate: step 3/6. It functions in the pathway amino-acid biosynthesis; L-methionine biosynthesis via salvage pathway; L-methionine from S-methyl-5-thio-alpha-D-ribose 1-phosphate: step 4/6. Functionally, bifunctional enzyme that catalyzes the enolization of 2,3-diketo-5-methylthiopentyl-1-phosphate (DK-MTP-1-P) into the intermediate 2-hydroxy-3-keto-5-methylthiopentenyl-1-phosphate (HK-MTPenyl-1-P), which is then dephosphorylated to form the acireductone 1,2-dihydroxy-3-keto-5-methylthiopentene (DHK-MTPene). This chain is Enolase-phosphatase E1, found in Shewanella baltica (strain OS223).